The sequence spans 65 residues: Large ribosomal subunit protein bL35 (65 aa).

Belongs to the bacterial ribosomal protein bL35 family.

This is Large ribosomal subunit protein bL35 from Syntrophobacter fumaroxidans (strain DSM 10017 / MPOB).